A 1511-amino-acid chain; its full sequence is Pleiotropic ABC efflux transporter of multiple drugs (1511 aa).

Polar residues predominate over residues 1 to 14; sequence MPEAKLNNNVNDVT. The interval 1-32 is disordered; that stretch reads MPEAKLNNNVNDVTSYSSASSSTENAADLHNY. The Cytoplasmic segment spans residues 1-517; the sequence is MPEAKLNNNV…LLIRNMWRLR (517 aa). Serine 22 is subject to Phosphoserine. Threonine 49 and threonine 51 each carry phosphothreonine. The tract at residues 52-71 is disordered; that stretch reads AQSMQNSTQSAPNKSDAQSI. Phosphoserine occurs at positions 54, 58, and 61. The ABC transporter 1 domain maps to 161–410; that stretch reads LRKFQRSKET…FEDMGYVCPS (250 aa). Residues 518 to 542 traverse the membrane as a helical segment; sequence NNIGFTLFMILGNCSMALILGSMFF. Topologically, residues 543 to 558 are extracellular; the sequence is KIMKKGDTSTFYFRGS. The chain crosses the membrane as a helical span at residues 559 to 579; the sequence is AMFFAILFNAFSSLLEIFSLY. Residues 580–611 lie on the Cytoplasmic side of the membrane; that stretch reads EARPITEKHRTYSLYHPSADAFASVLSEIPSK. A helical membrane pass occupies residues 612–628; it reads LIIAVCFNIIFYFLVDF. The Extracellular segment spans residues 629–631; it reads RRN. The helical transmembrane segment at 632 to 650 threads the bilayer; sequence GGVFFFYLLINIVAVFSMS. Topologically, residues 651-665 are cytoplasmic; that stretch reads HLFRCVGSLTKTLSE. A helical transmembrane segment spans residues 666-685; sequence AMVPASMLLLALSMYTGFAI. The Extracellular segment spans residues 686 to 774; the sequence is PKKKILRWSK…QYYHKDKWRG (89 aa). The N-linked (GlcNAc...) asparagine glycan is linked to asparagine 734. The helical transmembrane segment at 775-793 threads the bilayer; sequence FGIGMAYVVFFFFVYLFLC. Residues 794 to 1237 lie on the Cytoplasmic side of the membrane; the sequence is EYNEGAKQKG…GTSLQGLQNQ (444 aa). The segment at 824 to 858 is disordered; that stretch reads EKNANDPENVGERSDLSSDRKMLQESSEEESDTYG. Lysine 825 participates in a covalent cross-link: Glycyl lysine isopeptide (Lys-Gly) (interchain with G-Cter in ubiquitin). Residues 833-846 are compositionally biased toward basic and acidic residues; it reads VGERSDLSSDRKML. Phosphoserine is present on residues serine 837, serine 840, serine 841, serine 849, serine 850, and serine 854. Positions 869 to 1112 constitute an ABC transporter 2 domain; it reads FHWRNLCYEV…MIDYFESHGA (244 aa). 905–912 lines the ATP pocket; the sequence is GASGAGKT. Residues 1238–1260 traverse the membrane as a helical segment; it reads MLAVFMFTVIFNPILQQYLPSFV. Residues 1261–1291 lie on the Extracellular side of the membrane; it reads QQRDLYEARERPSRTFSWISFIFAQIFVEVP. Residues 1292-1313 form a helical membrane-spanning segment; that stretch reads WNILAGTIAYFIYYYPIGFYSN. The Cytoplasmic portion of the chain corresponds to 1314–1324; it reads ASAAGQLHERG. A helical membrane pass occupies residues 1325-1349; it reads ALFWLFSCAFYVYVGSMGLLVISFN. Residues 1350–1354 are Extracellular-facing; it reads QVAES. A helical membrane pass occupies residues 1355 to 1379; it reads AANLASLLFTMSLSFCGVMTTPSAM. Residues 1380 to 1388 lie on the Cytoplasmic side of the membrane; the sequence is PRFWIFMYR. Residues 1389 to 1407 form a helical membrane-spanning segment; that stretch reads VSPLTYFIQALLAVGVANV. At 1408–1476 the chain is on the extracellular side; the sequence is DVKCADYELL…VNSFYSERWR (69 aa). A glycan (N-linked (GlcNAc...) asparagine) is linked at asparagine 1447. Residues 1477-1499 traverse the membrane as a helical segment; sequence NYGIFICYIAFNYIAGVFFYWLA. At 1500 to 1511 the chain is on the cytoplasmic side; that stretch reads RVPKKNGKLSKK.

This sequence belongs to the ABC transporter superfamily. ABCG family. PDR (TC 3.A.1.205) subfamily. Post-translationally, ubiquitinylation mediates endocytosis and vacuolar degradation. Phosphorylation by casein kinase I stabilizes the protein half-life.

The protein localises to the cell membrane. With respect to regulation, FK506, isonitrile, enniatin, RU49953, kitasatospora E420, staurosporine CGP42700, prenyl-flavonoids, D-octapeptides were found to be inhibitors in vivo. Vanadate and oligomycin were found to be inhibitors in vitro. Functionally, active efflux of weakly charged organic compounds of 90 cubic Angstroms to 300 cubic Angstroms surface volume. Confers resistance to numerous chemicals including cycloheximide, sulfomethuron methyl, steroids, antiseptics, antibiotics, anticancer, herbicides, mycotoxins, insecticides, ionophores, alkaloids, flavonoids, phenothiazines, organotin compounds, carbazoles, lysosomotropic aminoesters, detergents, rhodamines and other fluorophores, azoles and other antifungals. Exhibits nucleoside triphosphatase activity. The chain is Pleiotropic ABC efflux transporter of multiple drugs (PDR5) from Saccharomyces cerevisiae (strain ATCC 204508 / S288c) (Baker's yeast).